Consider the following 64-residue polypeptide: MRIFSLIVAGLVLLIQLYPAWGTLYRRFLCKKMNGQCEAECFTFEQKIGTCQANFLCCRKRKEH.

The first 22 residues, 1–22 (MRIFSLIVAGLVLLIQLYPAWG), serve as a signal peptide directing secretion. Intrachain disulfides connect Cys30-Cys57, Cys37-Cys51, and Cys41-Cys58.

The protein belongs to the beta-defensin family. Expressed in testis and to a lesser extent in epididymis (caput, corpus and cauda). Also weakly expressed in kidneys.

It localises to the secreted. Its function is as follows. Has antibacterial activity. This chain is Beta-defensin 13 (Defb13), found in Mus musculus (Mouse).